We begin with the raw amino-acid sequence, 744 residues long: Prestin (744 aa).

Topologically, residues 1–75 are cytoplasmic; that stretch reads MDHAEENEIL…PITKWLPAYK (75 aa). Residues 76–105 traverse the membrane as a helical segment; that stretch reads FKEYVLGDLVSGISTGVLQLPQGLAFAMLA. At 106-108 the chain is on the extracellular side; sequence AVP. Residues 109–126 traverse the membrane as a helical segment; sequence PIFGLYSSFYPVIMYCFL. At 127–137 the chain is on the cytoplasmic side; that stretch reads GTSRHISIGPF. Residues 138–151 traverse the membrane as a helical segment; it reads AVISLMIGGVAVRL. At 152 to 168 the chain is on the extracellular side; it reads VPDDIVIPGGVNATNGT. The Involved in motor function motif lies at 158–168; that stretch reads IPGGVNATNGT. N163 and N166 each carry an N-linked (GlcNAc...) asparagine glycan. Residues 169–196 traverse the membrane as a helical segment; sequence EARDALRVKVAMSVTLLSGIIQFCLGVC. Topologically, residues 197 to 206 are cytoplasmic; that stretch reads RFGFVAIYLT. A helical membrane pass occupies residues 207–230; that stretch reads EPLVRGFTTAAAVHVFTSMLKYLF. Topologically, residues 231-241 are extracellular; that stretch reads GVKTKRYSGIF. Residues 242–253 constitute an intramembrane region (helical); that stretch reads SVVYSTVAVLQN. The Extracellular segment spans residues 254 to 258; it reads VKNLN. Residues 259 to 282 form a helical membrane-spanning segment; sequence VCSLGVGLMVFGLLLGGKEFNERF. Residues 283–291 are Cytoplasmic-facing; that stretch reads KEKLPAPIP. The helical transmembrane segment at 292 to 307 threads the bilayer; sequence LEFFAVVMGTGISAGF. The Extracellular portion of the chain corresponds to 308–332; sequence NLKESYNVDVVGTLPLGLLPPANPD. A helical membrane pass occupies residues 333 to 367; that stretch reads TSLFHLVYVDAIAIAIVGFSVTISMAKTLANKHGY. Topologically, residues 368–370 are cytoplasmic; it reads QVD. A helical membrane pass occupies residues 371–388; it reads GNQELIALGLCNSIGSLF. The Extracellular segment spans residues 389 to 396; sequence QTFSISCS. Residues 397 to 406 traverse the membrane as a helical segment; it reads LSRSLVQEGT. S398 provides a ligand contact to salicylate. Over 407-410 the chain is Cytoplasmic; the sequence is GGKT. Residues 411 to 432 form a helical membrane-spanning segment; that stretch reads QLAGCLASLMILLVILATGFLF. The Extracellular portion of the chain corresponds to 433–436; sequence ESLP. Residues 437–464 traverse the membrane as a helical segment; that stretch reads QAVLSAIVIVNLKGMFMQFSDLPFFWRT. A topological domain (cytoplasmic) is located at residue S465. Residues 466–481 traverse the membrane as a helical segment; that stretch reads KIELTIWLTTFVSSLF. Residues 482–483 lie on the Extracellular side of the membrane; it reads LG. A helical membrane pass occupies residues 484–504; that stretch reads LDYGLITAVIIALLTVIYRTQ. Positions 505–718 are extended region for STAS domain; the sequence is SPSYKVLGKL…AVLGSQLREA (214 aa). The Cytoplasmic portion of the chain corresponds to 505–744; the sequence is SPSYKVLGKL…PNATPATPEA (240 aa). An STAS domain is found at 525–713; that stretch reads AYEEVKEIPG…HSIHDAVLGS (189 aa). The interval 718–744 is disordered; that stretch reads ALAEQEASAPPSQEDLEPNATPATPEA.

It belongs to the SLC26A/SulP transporter (TC 2.A.53) family. Homodimer. Interacts (via STAS domain) with CALM; this interaction is calcium-dependent and the STAS domain interacts with only one lobe of CALM which is an elongated conformation. Interacts with MYH1.

Its subcellular location is the lateral cell membrane. The enzyme catalyses 2 hydrogencarbonate(in) + chloride(out) = 2 hydrogencarbonate(out) + chloride(in). Functionally, voltage-sensitive motor protein that drives outer hair cell (OHC) electromotility (eM) and participates in sound amplification in the hearing organ. Converts changes in the transmembrane electric potential into mechanical displacements resulting in the coupling of its expansion to movement of a charged voltage sensor across the lipid membrane. The nature of the voltage sensor is not completely clear, and two models compete. In the first model, acts as an incomplete transporter where intracellular chloride anion acts as extrinsic voltage sensor that drives conformational change in the protein which is sufficient to produce a length change in the plane of the membrane and hence in the length of the OHC. The second model in which multiple charged amino acid residues are distributed at the intracellular and extracellular membrane interfaces that form an intrinsic voltage sensor, whose movement produces the non-linear capacitance (NLC). However, the effective voltage sensor may be the result of a hybrid voltage sensor, assembled from intrinsic charge (charged residues) and extrinsic charge (bound anion). Notably, binding of anions to the anion-binding pocket partially neutralizes the intrinsic positive charge rather than to form an electrically negative sensor, therefore remaining charge may serve as voltage sensor that, after depolarization, moves from down (expanded state) to up (contracted) conformation, which is accompanied by an eccentric contraction of the intermembrane cross-sectional area of the protein as well as a major increase in the hydrophobic thickness of the protein having as consequences the plasma membrane thickening and the cell contraction after membrane depolarization. The anion-binding pocket transits from the inward-open (Down) state, where it is exposed toward the intracellular solvent in the absence of anion, to the occluded (Up) state upon anion binding. Salicylate competes for the anion-binding site and inhibits the voltage-sensor movement, and therefore inhibits the charge transfer and electromotility by displacing Cl(-) from the anion-binding site and by preventing the structural transitions to the contracted state. In addition, can act as a weak Cl(-)/HCO3(-) antiporter across the cell membrane and so regulate the intracellular pH of the outer hair cells (OHCs), while firstly found as being unable to mediate electrogenic anion transport. Moreover, supports a role in cardiac mechanical amplification serving as an elastic element to enhance the actomyosin- based sarcomere contraction system. The sequence is that of Prestin from Homo sapiens (Human).